The chain runs to 393 residues: GDP-4-keto-6-deoxy-D-mannose 3-dehydratase (393 aa).

Asn-30–Thr-33 contributes to the GDP-4-dehydro-alpha-D-rhamnose binding site. A helical transmembrane segment spans residues Tyr-53–Phe-73. Pyridoxal 5'-phosphate is bound by residues Gly-60–Ser-61, Trp-92, Glu-166, and Ser-187. His-192 acts as the Proton donor/acceptor in catalysis. His-219 provides a ligand contact to L-glutamate. Residue Arg-223 participates in GDP-4-dehydro-alpha-D-rhamnose binding. Asn-252 lines the pyridoxal 5'-phosphate pocket. Arg-254 serves as a coordination point for L-glutamate. Glu-333 contributes to the GDP-4-dehydro-alpha-D-rhamnose binding site.

It belongs to the DegT/DnrJ/EryC1 family. In terms of assembly, homodimer. It depends on pyridoxal 5'-phosphate as a cofactor.

It localises to the cell membrane. It carries out the reaction GDP-4-dehydro-alpha-D-rhamnose + L-glutamate = GDP-4-dehydro-3,6-dideoxy-alpha-D-mannose + 2-oxoglutarate + NH4(+). Its pathway is nucleotide-sugar metabolism; GDP-L-colitose biosynthesis. Involved in the biosynthesis of L-colitose, a 3,6-dideoxyhexose present in the O-antigen region of lipopolysaccharides (LPS), where it serves as an antigenic determinant and is vital for bacterial defense and survival. Catalyzes the removal of the C3'-hydroxyl group from GDP-4-keto-6-deoxy-D-mannose via a combined transamination-deoxygenation reaction. The catalysis is initiated by a transamination step in which pyridoxal 5'-phosphate (PLP) is converted to pyridoxamine 5'-phosphate (PMP) in the presence of L-glutamate. This coenzyme then forms a Schiff base with GDP-4-keto-6-deoxy-D-mannose and the resulting adduct undergoes a PMP-mediated beta-dehydration reaction to give a sugar enamine intermediate, which after tautomerization and hydrolysis to release ammonia yields GDP-4-keto-3,6-dideoxy-D-mannose as a product. This chain is GDP-4-keto-6-deoxy-D-mannose 3-dehydratase, found in Yersinia pseudotuberculosis.